Reading from the N-terminus, the 460-residue chain is MRFEDYPAEPFRIKSVETVKMIDKAAREEVIKKAGYNTFLINSEDVYIDLLTDSGTNAMSDKQWGGLMQGDEAYAGSRNFFHLEETVKEIFGFKHIVPTHQGRGAENILSQIAIKPGQYVPGNMYFTTTRYHQERNGGIFKDIIRDEAHDATLNVPFKGDIDLNKLQKLIDEVGAENIAYVCLAVTVNLAGGQPVSMKNMKAVRELTKKHGIKVFYDATRCVENAYFIKEQEEGYQDKTIKEIVHEMFSYADGCTMSGKKDCLVNIGGFLCMNDEDLFLAAKEIVVVYEGMPSYGGLAGRDMEAMAIGLRESLQYEYIRHRILQVRYLGEKLKEAGVPILEPVGGHAVFLDARRFCPHIPQEEFPAQALAAAIYVECGVRTMERGIISAGRDVKTGENHKPKLETVRVTIPRRVYTYKHMDVVAEGIIKLYKHKEDIKPLEFVYEPKQLRFFTARFGIKK.

Lysine 260 is subject to N6-(pyridoxal phosphate)lysine.

This sequence belongs to the beta-eliminating lyase family. As to quaternary structure, homotetramer. Requires pyridoxal 5'-phosphate as cofactor.

The catalysed reaction is L-tyrosine + H2O = phenol + pyruvate + NH4(+). The polypeptide is Tyrosine phenol-lyase (Fusobacterium nucleatum subsp. nucleatum (strain ATCC 25586 / DSM 15643 / BCRC 10681 / CIP 101130 / JCM 8532 / KCTC 2640 / LMG 13131 / VPI 4355)).